A 1868-amino-acid chain; its full sequence is MARWIPTKRQKYGVAIYNYNASQDVELSLQIGDTVHILEMYEGWYRGYALQNRSKKGIFPETYIHLKEATVEDGGQHETVIPGELPLVQELTNTLREWAVIWRKLYVNNKVTLFRQLQQMTYSLIEWRSQILSGTLPKDELAELKKKVTAKIDHGNRMLGLDLVVRDDNGNILDPDETSTVALFRAHEVASKRIEEKIQEEKSILQNLDLRGQAIFSTVHTYGLYVNFKNFVCNIGEDAELFIALYDPDQSTFISENYLIRWGSNGMPKEIEKLNNLQAVFTDLSSTDLIRPRISLVCQIVRVGRMELKEGKKHTCGLRRPFGVAVMDISDIVHGKVDDEEKQHFIPFQQIAMETYIRQRQLIMSPLITSHVIGENEPLTSVLNKVIAAKEVNHKGQGLWVSLKLLPGDLTQVQKNFSHLVDRSTAIARKMGFPEIILPGDVRNDIYVTLIHGEFDKGKKKTPKNVEVTMSVFDEEGNLLEKAIHPGAGYEGVSEYKSVVYYQVKQPCWYETVKVFIAIEEVTRCHIRFTFRHRSSQESRDKSERAFGVAFVKLMNADGTTLQDGRHDLVVYKGDNKKMEDAKYYLTLPGTKAELEEKELQASKNPSVFTPSKDSTKDSFQIATLICSTKLTQNVDLLGLLNWRSNSQNIKHNLKKLMEVDGGEIVKFLQDTLDALFNIMMEMSDNETYDFLVFDALVFIISLIGDIKFQHFNPVLETYIYKHFSATLAHVKLSKVLNFYVANAEDPSKTELLFAALKALKYLFRFIIQSRVLYLRFYGQSEDGDEFNDSIRQLFLAFNTLMDRPLEEAVKIKGAALKYLPSIINDVKLVFDPMELSVLFCKFIQSIPDNQLVRQKLNCMTKIVESSLFQQAECREVLLPLLTDQLSGQLDDHSTKPDHEASSQLLSNILEVLDRTDVGPTSAHVQLIMERLLRRINRTVIGMSRQSPHIGSFVACMIAVLRQMEDSHYSHYISTFKTRQDIIDFLMETFIMFKDLIGKNVYAKDWMVMNMTQNRVFLRAINQFAEVLTKSFMDQASFELQLWNNYFHLAVAFLTHESLQLETFSEAKRNKIVKKYGDMRKEIGFRIRDMWYNLGPHKIKFIPSMVGPILEVTLTPEVELRKATIPIFFDMMQCEFNLSGNGNFHMFENELITKLDQEVEGGRGDEQYKVLLEKLLLEHCRKHKYLANSGEAFAFLVSSLLENLLDYRTIIIHDESKENRMSCTVNVLNFYKDKKREDIYIRYLYKLRDLHRDCENYTEAAYTLLLHAELLQWSDKPCVPHLLQRDSYYVYTQQELKEKLYQEIISYFDKGKMWEKAIKLSKELAETYESKVFDYEGLGSLLKKRALFYENIIKAMRPQPEYFAVGYYGQGFPSFLRNKIFIYRGKEYERREDFSLRLLTQFPNAEKMTSTTPPGEDIKSSPKQYLQCFTVKPVMSLPPSYKDKPVPEQILNYYRANEVQQFSYSRPFRKGEKDPENEFATMWIERTTYRTAYTFPGILKWFEAKEISVEEISPLENAIETMELTNERVSNCVQQHAWDHSLSVHPLSMLLSGIVDPAVMGGFSNYEKAFFTEKYLQEHPEDQEKVELLKRLIALQIPLLTEGIRIHGEKLTEQLKPLHARLSSCFRELKEKVEKLYGVITLPPSMTERKPSRAGSMVLPYILSSTLRRLSVTSVASSVISTSSNSSDNASSRPGSDGSILEPLFERRASSGARVEDLPPKEDSENRISKFKRKDWNLSKSQVIAEKAPEPDVMSPGKKTQRPKSLQLVDSRLTPFHSPSPLQSTALSPPPLTPKATRTLSSPSLQTDGLTASVPPPPPPKSKPYESSQRNSAEIAPPLPVRRDSKAPPPPPPKARKSGILSSEPGSQ.

Residues K8–A69 form the SH3 domain. S365 is subject to Phosphoserine. Residues R443–C627 form the C2 DOCK-type domain. Position 818 is an N6-acetyllysine (K818). The 412-residue stretch at Y1231–L1642 folds into the DOCKER domain. Low complexity predominate over residues S1681–S1692. Disordered regions lie at residues S1681–K1730 and Q1742–Q1868. A compositionally biased stretch (basic and acidic residues) spans L1704–I1728. Phosphoserine is present on residues S1755, S1765, S1771, S1784, and S1788. T1793 carries the phosphothreonine modification. A compositionally biased stretch (polar residues) spans A1796–L1810. Residues S1832 and S1867 each carry the phosphoserine modification.

The protein belongs to the DOCK family. As to quaternary structure, interacts with CRK and CRKL. Interacts (via N-terminus) with tensin TNS3 (via N-terminus); the interaction increases DOCK5 guanine nucleotide exchange activity towards Rac. Interacts with ELMO1. As to expression, highly expressed in lens, where it predominantly localizes to anterior epithelial cells, and is weakly expressed in lens fiber (at protein level). Expressed in brain, eye, lung, spleen and kidney, but not in thymus or peripheral blood leukocytes.

The protein resides in the cytoplasm. It is found in the cell membrane. It localises to the cell projection. The protein localises to the podosome. Guanine nucleotide exchange factor (GEF) for Rho and Rac. GEF proteins activate small GTPases by exchanging bound GDP for free GTP. Along with DOCK1, mediates CRK/CRKL regulation of epithelial and endothelial cell spreading and migration on type IV collagen. The polypeptide is Dedicator of cytokinesis protein 5 (Mus musculus (Mouse)).